The primary structure comprises 177 residues: Early nodulin-like protein 15 (177 aa).

Residues Met-1–Ala-24 form the signal peptide. The Phytocyanin domain occupies Asn-25–Thr-129. The cysteines at positions 83 and 117 are disulfide-linked. The N-linked (GlcNAc...) asparagine glycan is linked to Asn-84. Ser-153 carries the GPI-anchor amidated serine lipid modification. Positions Gly-154–Phe-177 are cleaved as a propeptide — removed in mature form.

The protein belongs to the early nodulin-like (ENODL) family. As to expression, mostly expressed in seedlings, siliques and flowers, and, to a lower extent, in roots, stems and seeds, but barely in leaves.

It is found in the cell membrane. Its function is as follows. May act as a carbohydrate transporter. Required, together with ENODL11, ENODL12, ENODL13, ENODL14 and ENODL15, for male-female communication and pollen tube reception and burst at the synergid cell surface of the female gametophyte. The chain is Early nodulin-like protein 15 from Arabidopsis thaliana (Mouse-ear cress).